The following is a 297-amino-acid chain: N-acetylmuramic acid 6-phosphate etherase (297 aa).

The region spanning alanine 55–lysine 218 is the SIS domain. Glutamate 83 (proton donor) is an active-site residue. The active site involves glutamate 114.

Belongs to the GCKR-like family. MurNAc-6-P etherase subfamily. In terms of assembly, homodimer.

The catalysed reaction is N-acetyl-D-muramate 6-phosphate + H2O = N-acetyl-D-glucosamine 6-phosphate + (R)-lactate. It participates in amino-sugar metabolism; 1,6-anhydro-N-acetylmuramate degradation. The protein operates within amino-sugar metabolism; N-acetylmuramate degradation. It functions in the pathway cell wall biogenesis; peptidoglycan recycling. Its function is as follows. Specifically catalyzes the cleavage of the D-lactyl ether substituent of MurNAc 6-phosphate, producing GlcNAc 6-phosphate and D-lactate. Together with AnmK, is also required for the utilization of anhydro-N-acetylmuramic acid (anhMurNAc) either imported from the medium or derived from its own cell wall murein, and thus plays a role in cell wall recycling. The chain is N-acetylmuramic acid 6-phosphate etherase from Salmonella paratyphi B (strain ATCC BAA-1250 / SPB7).